We begin with the raw amino-acid sequence, 1493 residues long: MPSSPYGANASTSHQHVKQNAHPSAPLSRTSPSLPPKPTVAMNGNGHYHAAPTSVALDKNKQTATSSHNLMIGVPPAATPNLSLAQSRPPDSKQSSDADGHPVFLSSAKGKQKQVDPIHIPLAQLEQELPLEEADLISLAALVERLANFGYEALQNLAETLPSLPSSSKRAKIFNTALNVRKQFIKLLVLARWSKDISDLQKSRNIIALLSEQQWQHEDVFAGLTDIRKILPNARMRNADLPTAIDVLHTGTYRRLPASIKQMAVAPKPFTDQQALLIVSRLEDALRTRMACRELVPAPLSNYTIHDGKVHFHVPGLFQAQLTASGSAQHELTPSSSDDRWWLLDLTFDVIASGSCAASCNRAFPRKPKRAYRERLRVWGDQQLSPVIQSDGVDESNARPLDIAADKTEQGTDVQIAPEKPTDAPTVNEANPAITATHHDDSLMPTAPVQRDAPLSRLFAFLQERALHYQMDILQHQAYELCRLNWGSNLRIETAERPRNLTVHYWTQAQGAAGATQRVESAAAGGSVQITIVDLPDTPGATETLAALFDGDDDQSSTTHDTASLTTVKRRGLQVTWDADRSILADAQSNNLAISPHSLDIEALLSSVIKQHTLALLRNLQRRILVSDHALSRLLRPEDCTLCLEHIQRQGDEFSTATETTTFNFLQIDLHASQRPRTAKSKPNPKPEQRSASCLAPLRLSVDPVTGRLLLDSEPAQSTTDLSSEQTSQQAASFTASILTTRPNYARLAEASDRINESIDALLDVLYRLDVFARVQEWERMASYLGLRSVRKLALRPQDLAKLGASTLASAEAAPQLFLPLRQSFGGYFLALQPSELAGVSIALVYVVQVMDPTGTPALSVQSIEWLDRAKIAAAASKVGSSGEDVGQEFVATEAGTKRKAPPGVQGETNDVDANFGSSELTIEELADVHSYCIALVSYFRVEQQLRMRGLPYLHVGSNTMRSSPPCKRQRRQQTADARDDGLFGEDASGGTASSDDEAFAGPAGVAGVAALVPSLCLRSIDVLGPSKSHLAKPNISLRVRHWDDDEKLCVEMRIKLRMKSRQFRTLHEVVALAASSDQQSTCALTWIDFDREASLLTLTTRDLDNCMSIFHTHWERVMRMVQLTREVLNASRAWQQRALRLRRSCKKPGERVELCRFELDSVVFSYGSIKVDGLEAKLLVRVRWQDAKLEMQAFSPIGVTQSGGYILEFGSMRSVQVEALDQDAQLREDGVSRWFDETHCLANPHKVMALELRRTVNVAARSAAMHAMLQPQAERIVWRGFLELLQHTLPLVREMAPLVDKCLTHAHVPEVEIKSATWFRFRFQDRYAIDVRLATRSRLVVSDASRALFASEVRTSESESESETTDAVPLDAVFGGSQLLNDLLDATTLARKCSKPKTRIAAQLSSAQFGPIPNIEHVLRSVHAKLDAITWIDARDHRSSAARLRVYELGRALLISLPSASHPNAQAAYHAIAHLVPLLIDRVEAQLARSTP.

Disordered stretches follow at residues 1 to 51 (MPSS…YHAA), 71 to 110 (MIGV…SAKG), 408 to 427 (TEQG…APTV), 674 to 693 (QRPR…RSAS), 894 to 913 (EAGT…NDVD), and 957 to 997 (GSNT…SSDD). Residues 90–100 (PDSKQSSDADG) are compositionally biased toward basic and acidic residues.

This sequence belongs to the Mediator complex subunit 14 family. As to quaternary structure, component of the Mediator complex.

The protein localises to the nucleus. In terms of biological role, component of the Mediator complex, a coactivator involved in the regulated transcription of nearly all RNA polymerase II-dependent genes. Mediator functions as a bridge to convey information from gene-specific regulatory proteins to the basal RNA polymerase II transcription machinery. Mediator is recruited to promoters by direct interactions with regulatory proteins and serves as a scaffold for the assembly of a functional preinitiation complex with RNA polymerase II and the general transcription factors. This Mycosarcoma maydis (Corn smut fungus) protein is Mediator of RNA polymerase II transcription subunit 14 (RGR1).